Reading from the N-terminus, the 450-residue chain is Tubulin alpha chain (450 aa).

Q11 is a binding site for GTP. K40 bears the N6-acetyllysine mark. E71, S140, G144, T145, T179, N206, and N228 together coordinate GTP. Residue E71 coordinates Mg(2+). Residue E254 is part of the active site.

This sequence belongs to the tubulin family. As to quaternary structure, dimer of alpha and beta chains. A typical microtubule is a hollow water-filled tube with an outer diameter of 25 nm and an inner diameter of 15 nM. Alpha-beta heterodimers associate head-to-tail to form protofilaments running lengthwise along the microtubule wall with the beta-tubulin subunit facing the microtubule plus end conferring a structural polarity. Microtubules usually have 13 protofilaments but different protofilament numbers can be found in some organisms and specialized cells. The cofactor is Mg(2+). In terms of processing, acetylation of alpha chains at Lys-40 stabilizes microtubules and affects affinity and processivity of microtubule motors. This modification has a role in multiple cellular functions, ranging from cell motility, cell cycle progression or cell differentiation to intracellular trafficking and signaling.

The protein resides in the cytoplasm. It is found in the cytoskeleton. It catalyses the reaction GTP + H2O = GDP + phosphate + H(+). Its function is as follows. Tubulin is the major constituent of microtubules, a cylinder consisting of laterally associated linear protofilaments composed of alpha- and beta-tubulin heterodimers. Microtubules grow by the addition of GTP-tubulin dimers to the microtubule end, where a stabilizing cap forms. Below the cap, tubulin dimers are in GDP-bound state, owing to GTPase activity of alpha-tubulin. The polypeptide is Tubulin alpha chain (Oxytricha granulifera (Ciliate)).